The chain runs to 387 residues: N-acetyldiaminopimelate deacetylase (387 aa).

Aspartate 75 is a catalytic residue. The active-site Proton acceptor is glutamate 134.

This sequence belongs to the peptidase M20A family. N-acetyldiaminopimelate deacetylase subfamily.

The enzyme catalyses N-acetyl-(2S,6S)-2,6-diaminopimelate + H2O = (2S,6S)-2,6-diaminopimelate + acetate. The protein operates within amino-acid biosynthesis; L-lysine biosynthesis via DAP pathway; LL-2,6-diaminopimelate from (S)-tetrahydrodipicolinate (acetylase route): step 3/3. Catalyzes the conversion of N-acetyl-diaminopimelate to diaminopimelate and acetate. This Leuconostoc citreum (strain KM20) protein is N-acetyldiaminopimelate deacetylase.